A 78-amino-acid chain; its full sequence is Large ribosomal subunit protein bL28 (78 aa).

It belongs to the bacterial ribosomal protein bL28 family.

This is Large ribosomal subunit protein bL28 from Dichelobacter nodosus (strain VCS1703A).